Here is a 1132-residue protein sequence, read N- to C-terminus: Phycobiliprotein ApcE (1132 aa).

Cys-196 serves as a coordination point for (2R,3E)-phycocyanobilin. PBS-linker domains lie at Asp-253–Val-433, Leu-514–Glu-692, Pro-709–Asn-887, and Gly-940–Ser-1121.

It belongs to the phycobilisome linker protein family. As to quaternary structure, heterodimer of ApcF (a variant beta-allophycocyanin). Phycobilisomes of this organism are composed of a two cylinder core, from which six rods radiate. The core is mainly composed of allophycocyanin alpha and beta chains and of minor components. Contains one covalently linked bilin chromophore. This protein autochromophorylates.

It localises to the cellular thylakoid membrane. Functionally, this protein is postulated to act both as terminal energy acceptor (by its phycobilin-like domains) and as a linker polypeptide (by its repeats and arms) that stabilizes the phycobilisome core architecture. Has intrinsic bilin lyase activity. This Nostoc sp. (strain PCC 7120 / SAG 25.82 / UTEX 2576) protein is Phycobiliprotein ApcE (apcE).